The following is a 70-amino-acid chain: Beta-defensin 107 (70 aa).

A signal peptide spans 1–26 (MPGAMKIFVFILAALILLAQIFQART). Disulfide bonds link Cys41/Cys55 and Cys45/Cys64.

It belongs to the beta-defensin family. Specifically expressed in testis.

It is found in the secreted. Has antibacterial activity. In Homo sapiens (Human), this protein is Beta-defensin 107 (DEFB107A).